Here is a 654-residue protein sequence, read N- to C-terminus: Insulin receptor substrate 1 (654 aa).

The PH domain occupies 3-107; sequence DIKKCGYLRK…WYQAILEVQA (105 aa). Y36 is modified (phosphotyrosine). Residues 126-230 enclose the IRS-type PTB domain; sequence FREVWQVSVR…EAMKSLSEEF (105 aa). Residues 228 to 329 are disordered; sequence EEFRPRTKSQ…EYGSSPGVLE (102 aa). Polar residues predominate over residues 235 to 245; that stretch reads KSQSLSSTPIS. S276 carries the post-translational modification Phosphoserine. A compositionally biased stretch (polar residues) spans 307 to 321; sequence NESSADYGSASSDEY. Phosphotyrosine; by INSR is present on Y345. 6 consecutive short sequence motifs (YXXM motif) follow at residues 345–348, 384–387, 398–401, 411–414, 430–433, and 466–469; these read YISM, YAMM, YMPM, YVMM, and YMNM. Residues Y398 and Y411 each carry the phosphotyrosine; by INSR modification. Y430 is subject to Phosphotyrosine. Disordered stretches follow at residues 473-494 and 507-532; these read SRSA…GGPC and YKME…VNAG. Positions 514 to 524 are enriched in low complexity; sequence SARASCSSSSD. Y563 is subject to Phosphotyrosine; by INSR.

As to quaternary structure, interacts with the NPXY motif of tyrosine-phosphorylated igf1r and insr via the PTB domain. Binds to phosphatidylinositol 3-kinase p85 subunit via the phosphorylated YXXM motifs.

Its function is as follows. May mediate the control of various cellular processes by insulin. When phosphorylated by the insulin receptor binds specifically to various cellular proteins containing SH2 domains such as phosphatidylinositol 3-kinase p85 subunit or grb2. Activates phosphatidylinositol 3-kinase when bound to the regulatory p85 subunit. This is Insulin receptor substrate 1 from Xenopus tropicalis (Western clawed frog).